The sequence spans 115 residues: Protein SPIRAL1-like 2 (115 aa).

The disordered stretch occupies residues 29–48; the sequence is AKAKPAAAAEKETTPAPVKK.

It belongs to the SPIRAL1 family.

Functionally, acts in maintaining the cortical microtubules organization essential for anisotropic cell growth. In Oryza sativa subsp. japonica (Rice), this protein is Protein SPIRAL1-like 2.